A 1048-amino-acid chain; its full sequence is Protein argonaute 7 (1048 aa).

The segment covering 1 to 14 (MEGEREGVVAKNED) has biased composition (basic and acidic residues). 2 disordered regions span residues 1 to 50 (MEGE…GSSG) and 121 to 141 (KAAD…KKPP). Residues 16–37 (AGGGGGGLGTGGNGGGGGGGSA) show a composition bias toward gly residues. Residues 131-141 (MWKHRPSKKPP) are compositionally biased toward basic residues. Residues 422-530 (KRCDFLKDLP…VPMELCVVCE (109 aa)) enclose the PAZ domain. The Piwi domain maps to 709–1017 (LLICVMERRH…AAYRGRLYLE (309 aa)).

This sequence belongs to the argonaute family. Ago subfamily. In terms of tissue distribution, expressed in the reproductive shoot apex.

In terms of biological role, involved in the RNA silencing pathway. May bind to short RNAs such as microRNAs (miRNAs) or short interfering RNAs (siRNAs), and represses the translation of mRNAs which are complementary to them. Regulates shoot apical meristem (SAM) initiation and maintenance and leaf polarization through the trans-acting siRNAS (ta-siRNAs) pathway which probably modulates the expression of the ARF2, ARF3, ARF4, ARF14 and ARF15 genes. In Oryza sativa subsp. japonica (Rice), this protein is Protein argonaute 7 (AGO7).